A 598-amino-acid chain; its full sequence is Serine/threonine-protein kinase PLK1 (598 aa).

A disordered region spans residues 1-26; sequence MAQVAGKKLTVAPEAGKPPGIPGSSS. S25 and S26 each carry phosphoserine. The Protein kinase domain maps to 44-296; it reads YLRGRFLGKG…IDDLLNDEFF (253 aa). ATP is bound by residues 50–58, K73, and E122; that span reads LGKGGFAKC. The active-site Proton acceptor is the D167. Residues 169-172 and D185 contribute to the ATP site; that span reads KLGN. The tract at residues 185-212 is activation loop; sequence DFGLATKVEYDGERKKTLCGTPNYIAPE. T201 bears the Phosphothreonine mark. 2 positions are modified to phosphoserine; by autocatalysis: S260 and S326. A D-box that targets the protein for proteasomal degradation in anaphase motif is present at residues 328-331; the sequence is RKPL. The tract at residues 336–360 is disordered; it reads KGQDSPLVEKQSVPAKEEEMQQPES. The residue at position 340 (S340) is a Phosphoserine. The region spanning 404-482 is the POLO box 1 domain; it reads WVSKWVDYSD…LKYFRNYMSE (79 aa). The segment at 487–501 is linker; sequence AGANITPREGDELAR. The POLO box 2 domain occupies 504–586; sequence FLRTWFRTRS…ARTMVEKLQS (83 aa). The important for interaction with phosphorylated proteins stretch occupies residues 532–534; it reads HTK.

The protein belongs to the protein kinase superfamily. Ser/Thr protein kinase family. In terms of assembly, interacts with plk1 and kif2a. Interacts with fbxo5. Post-translationally, activated by phosphorylation on Thr-201 during M phase. Protein levels are down-regulated by proteasomal degradation in anaphase.

It is found in the nucleus. Its subcellular location is the cytoplasm. The protein resides in the cytoskeleton. The protein localises to the microtubule organizing center. It localises to the centrosome. It is found in the spindle. Its subcellular location is the midbody. It catalyses the reaction L-seryl-[protein] + ATP = O-phospho-L-seryl-[protein] + ADP + H(+). It carries out the reaction L-threonyl-[protein] + ATP = O-phospho-L-threonyl-[protein] + ADP + H(+). Its function is as follows. Plays multiple essential roles during mitosis. Phosphorylates the N-terminal domain of cdc25, which leads to cyclin b-cdc2 activation and mitotic entry. Also required for organization of bipolar spindles, and for exit from mitosis. Phosphorylates tpx2. In Xenopus tropicalis (Western clawed frog), this protein is Serine/threonine-protein kinase PLK1 (plk1).